The primary structure comprises 252 residues: Chitooligosaccharide deacetylase (252 aa).

Positions 61 and 125 each coordinate Mg(2+).

This sequence belongs to the YdjC deacetylase family. ChbG subfamily. Homodimer. Mg(2+) is required as a cofactor.

The protein resides in the cytoplasm. The enzyme catalyses N,N'-diacetylchitobiose + H2O = N-acetyl-beta-D-glucosaminyl-(1-&gt;4)-D-glucosamine + acetate. The catalysed reaction is diacetylchitobiose-6'-phosphate + H2O = N'-monoacetylchitobiose-6'-phosphate + acetate. Its pathway is glycan degradation; chitin degradation. Its function is as follows. Involved in the degradation of chitin. ChbG is essential for growth on the acetylated chitooligosaccharides chitobiose and chitotriose but is dispensable for growth on cellobiose and chitosan dimer, the deacetylated form of chitobiose. Deacetylation of chitobiose-6-P and chitotriose-6-P is necessary for both the activation of the chb promoter by the regulatory protein ChbR and the hydrolysis of phosphorylated beta-glucosides by the phospho-beta-glucosidase ChbF. Catalyzes the removal of only one acetyl group from chitobiose-6-P to yield monoacetylchitobiose-6-P, the inducer of ChbR and the substrate of ChbF. The polypeptide is Chitooligosaccharide deacetylase (Escherichia coli (strain 55989 / EAEC)).